Reading from the N-terminus, the 67-residue chain is DNA-directed RNA polymerase subunit omega (67 aa).

It belongs to the RNA polymerase subunit omega family. As to quaternary structure, the RNAP catalytic core consists of 2 alpha, 1 beta, 1 beta' and 1 omega subunit. When a sigma factor is associated with the core the holoenzyme is formed, which can initiate transcription.

The enzyme catalyses RNA(n) + a ribonucleoside 5'-triphosphate = RNA(n+1) + diphosphate. Promotes RNA polymerase assembly. Latches the N- and C-terminal regions of the beta' subunit thereby facilitating its interaction with the beta and alpha subunits. This chain is DNA-directed RNA polymerase subunit omega, found in Burkholderia ambifaria (strain MC40-6).